Consider the following 225-residue polypeptide: 7-cyano-7-deazaguanine synthase (225 aa).

Position 10 to 20 (10 to 20 (FSGGQDSTTLA)) interacts with ATP. Residues Cys-190, Cys-205, Cys-208, and Cys-211 each contribute to the Zn(2+) site.

It belongs to the QueC family. Zn(2+) serves as cofactor.

It catalyses the reaction 7-carboxy-7-deazaguanine + NH4(+) + ATP = 7-cyano-7-deazaguanine + ADP + phosphate + H2O + H(+). Its pathway is purine metabolism; 7-cyano-7-deazaguanine biosynthesis. In terms of biological role, catalyzes the ATP-dependent conversion of 7-carboxy-7-deazaguanine (CDG) to 7-cyano-7-deazaguanine (preQ(0)). The protein is 7-cyano-7-deazaguanine synthase of Helicobacter acinonychis (strain Sheeba).